We begin with the raw amino-acid sequence, 353 residues long: Very-long-chain 3-oxoacyl-CoA reductase (353 aa).

A helical transmembrane segment spans residues 33–53 (AAWALIAAGGFFVISRALLFG). Residues Val-78, Asp-133, Asp-141, Asn-160, Tyr-227, Lys-231, Ile-260, and Ser-262 each coordinate NADP(+). Residue Tyr-227 is the Proton donor of the active site. Catalysis depends on Lys-231, which acts as the Lowers pKa of active site Tyr.

It belongs to the short-chain dehydrogenases/reductases (SDR) family.

It localises to the endoplasmic reticulum membrane. It catalyses the reaction a very-long-chain (3R)-3-hydroxyacyl-CoA + NADP(+) = a very-long-chain 3-oxoacyl-CoA + NADPH + H(+). Its pathway is lipid metabolism; fatty acid biosynthesis. In terms of biological role, component of the microsomal membrane bound fatty acid elongation system, which produces the 26-carbon very long-chain fatty acids (VLCFA) from palmitate. Catalyzes the reduction of the 3-ketoacyl-CoA intermediate that is formed in each cycle of fatty acid elongation. VLCFAs serve as precursors for ceramide and sphingolipids. The protein is Very-long-chain 3-oxoacyl-CoA reductase of Aspergillus terreus (strain NIH 2624 / FGSC A1156).